The primary structure comprises 229 residues: Large ribosomal subunit protein uL1 (229 aa).

This sequence belongs to the universal ribosomal protein uL1 family. Part of the 50S ribosomal subunit.

In terms of biological role, binds directly to 23S rRNA. The L1 stalk is quite mobile in the ribosome, and is involved in E site tRNA release. Functionally, protein L1 is also a translational repressor protein, it controls the translation of the L11 operon by binding to its mRNA. This chain is Large ribosomal subunit protein uL1, found in Chlorobium chlorochromatii (strain CaD3).